We begin with the raw amino-acid sequence, 283 residues long: MNWDDLRVVAAINRCGSFNRAAKMLNVEETTIARRLARLEGSLGCVLFQAVDGQRRPTEQCRALLQPLVLMEQAAEAITLQLERQERPLRNFRLTTIDAIAQHYLAPTLADLLIAEPELSLQLETSDDNVDMARWHADIAIRLGRPRRGNFTMRRVGEMRFNLVLPRGAAPEDLVLAAYPDPLMEVPEMQDFQQYFPGRQARLRSANLRVIRVLVDSGRAAAVLPDFLSVDLVGDERFQVHRLPARREIWLLAQPHLRDDPLARRVTNWCADLFAETLAGDAV.

The HTH lysR-type domain maps to 1 to 58 (MNWDDLRVVAAINRCGSFNRAAKMLNVEETTIARRLARLEGSLGCVLFQAVDGQRRPT). Positions 18–37 (FNRAAKMLNVEETTIARRLA) form a DNA-binding region, H-T-H motif.

It belongs to the LysR transcriptional regulatory family.

Transcriptional activator of the mau genes involved in methylamine metabolism. The protein is Mau operon transcriptional activator (mauR) of Paracoccus denitrificans.